A 341-amino-acid polypeptide reads, in one-letter code: DNA-directed RNA polymerase subunit alpha (341 aa).

The segment at 1–237 is alpha N-terminal domain (alpha-NTD); sequence MLSLSKNWNA…EQLQLFISFE (237 aa). An alpha C-terminal domain (alpha-CTD) region spans residues 252-341; it reads FSPYLLKRVD…LSKRYEDSYN (90 aa).

It belongs to the RNA polymerase alpha chain family. Homodimer. The RNAP catalytic core consists of 2 alpha, 1 beta, 1 beta' and 1 omega subunit. When a sigma factor is associated with the core the holoenzyme is formed, which can initiate transcription.

It catalyses the reaction RNA(n) + a ribonucleoside 5'-triphosphate = RNA(n+1) + diphosphate. Its function is as follows. DNA-dependent RNA polymerase catalyzes the transcription of DNA into RNA using the four ribonucleoside triphosphates as substrates. The chain is DNA-directed RNA polymerase subunit alpha from Rickettsia bellii (strain OSU 85-389).